Here is a 743-residue protein sequence, read N- to C-terminus: Tudor domain-containing protein 3 (743 aa).

The segment at Lys-241–Arg-262 is disordered. The UBA domain occupies Leu-286 to Ser-326. Disordered stretches follow at residues Ser-327–Thr-365 and Glu-380–Arg-549. Phosphoserine is present on Ser-349. Residues Pro-414 to Lys-431 show a composition bias toward basic and acidic residues. Residues Asp-432–Leu-445 show a composition bias toward polar residues. Ser-438 is subject to Phosphoserine. Basic and acidic residues-rich tracts occupy residues Ala-464 to Ser-484 and Arg-536 to Arg-549. Lys-563 participates in a covalent cross-link: Glycyl lysine isopeptide (Lys-Gly) (interchain with G-Cter in SUMO2). The segment at Thr-572–Lys-603 is disordered. The Tudor domain occupies Val-647–Glu-707. A compositionally biased stretch (basic and acidic residues) spans Tyr-711–Pro-725. Residues Tyr-711–Asn-743 are disordered. The EBM motif; may mediate interaction with the EJC stretch occupies residues Gly-723–Asn-743.

As to quaternary structure, component of mRNA stress granules. Interacts with FMR1, FXR1, FXR2, EWSR1, FUS, SERBP1, EEF1A1 and DDX3X or DDX3Y, and with the small nuclear ribonucleoprotein-associated proteins SNRPB and SNRPN. Interacts with 'Lys-48'-linked tetra-ubiquitin, but not with monoubiquitin or 'Lys-63'-linked ubiquitin chains. May interact with the exon junction complex (EJC) composed at least of CASC3, EIF4A3, MAGOH and RBM8A. Interacts with POLR2A (via the C-terminal domain (CTD)).

It localises to the cytoplasm. The protein resides in the nucleus. In terms of biological role, scaffolding protein that specifically recognizes and binds dimethylarginine-containing proteins. Plays a role in the regulation of translation of target mRNAs by binding Arg/Gly-rich motifs (GAR) in dimethylarginine-containing proteins. In nucleus, acts as a coactivator: recognizes and binds asymmetric dimethylation on the core histone tails associated with transcriptional activation (H3R17me2a and H4R3me2a) and recruits proteins at these arginine-methylated loci. In cytoplasm, acts as an antiviral factor that participates in the assembly of stress granules together with G3BP1. This is Tudor domain-containing protein 3 (Tdrd3) from Mus musculus (Mouse).